Consider the following 362-residue polypeptide: Peptide chain release factor 1 (362 aa).

An N5-methylglutamine modification is found at glutamine 240.

Belongs to the prokaryotic/mitochondrial release factor family. Methylated by PrmC. Methylation increases the termination efficiency of RF1.

The protein resides in the cytoplasm. In terms of biological role, peptide chain release factor 1 directs the termination of translation in response to the peptide chain termination codons UAG and UAA. In Bifidobacterium longum (strain NCC 2705), this protein is Peptide chain release factor 1.